The primary structure comprises 134 residues: MTLQVCIMTPDRIFWNDQADEIILPTNTGQMGVLTNHAPLITALDIGVTLIRSNSNWNPVALMGGFALVKQNQVTILVNEAESAQTIGVDEAEIAFQEAKTKLEQSQGEKQRVEATFVFKRARARYQVVKQLGV.

This sequence belongs to the ATPase epsilon chain family. As to quaternary structure, F-type ATPases have 2 components, CF(1) - the catalytic core - and CF(0) - the membrane proton channel. CF(1) has five subunits: alpha(3), beta(3), gamma(1), delta(1), epsilon(1). CF(0) has three main subunits: a, b and c.

The protein localises to the plastid. It is found in the chloroplast thylakoid membrane. Its function is as follows. Produces ATP from ADP in the presence of a proton gradient across the membrane. The polypeptide is ATP synthase epsilon chain, chloroplastic (Chlorella vulgaris (Green alga)).